Consider the following 428-residue polypeptide: Glutamate-1-semialdehyde 2,1-aminomutase (428 aa).

Lysine 265 is modified (N6-(pyridoxal phosphate)lysine).

Belongs to the class-III pyridoxal-phosphate-dependent aminotransferase family. HemL subfamily. Homodimer. Pyridoxal 5'-phosphate serves as cofactor.

It is found in the cytoplasm. The enzyme catalyses (S)-4-amino-5-oxopentanoate = 5-aminolevulinate. The protein operates within porphyrin-containing compound metabolism; protoporphyrin-IX biosynthesis; 5-aminolevulinate from L-glutamyl-tRNA(Glu): step 2/2. This is Glutamate-1-semialdehyde 2,1-aminomutase from Shewanella loihica (strain ATCC BAA-1088 / PV-4).